The chain runs to 102 residues: MDIKQTAVAGSLESSDLMITVSPNDEKTITITLDSSVEKQFGNHIRQLIHQTLVNLKVTAAKVEAVDKGALDCTIQARTIAAVHRAAGVDQYDWKEIDSWNV.

At Ser14 the chain carries O-(phosphoribosyl dephospho-coenzyme A)serine.

Belongs to the CitD family. As to quaternary structure, oligomer with a subunit composition of (alpha,beta,gamma)6.

It localises to the cytoplasm. Covalent carrier of the coenzyme of citrate lyase. In Streptococcus pyogenes serotype M4 (strain MGAS10750), this protein is Citrate lyase acyl carrier protein.